The chain runs to 456 residues: MGAVLGACTAASCAANLACCCGSAACSLCCNFCPTCKNSTSTRIVYSIFLLFGLVVSCIVLAPGIRHKLNQIPYLCEHASETCDSIVGYLAVYRVCFGLAAFFLLFCLLMYGVTSSRDVRSKIQNGFWGIKILLFLGAIVAAFFIPQGKFSEVWMYFGLIGSFLFILIQLVLLVDFAHTWNSSWVGRMEESGSKVWAVLLLCATFLMYGFCVAGIVCLYVYFTYSQESSCHTNKFFISFNLILCIIASVLAIHPKVQERLPTSGLLQASVISLYTVYLTWSALSFQPDKNCNGFYETHITLAGMDSQAIIGVILMFVMVVYASVRTASSSQVGKLGMSSPKHSSALDKETTVLSEGDETRSDVGLVEEGGEGRRVYDDEDGGVAYSYSFYHFMLMLASLYIMMTLTNWYKPVGSDFSKLQYSETAVWVKIASSWLCQLIYIWTLLAPALFPDRDFS.

The next 11 helical transmembrane spans lie at 10 to 32, 44 to 64, 95 to 115, 126 to 146, 153 to 173, 195 to 215, 234 to 254, 265 to 285, 301 to 321, 383 to 403, and 430 to 450; these read AASCAANLACCCGSAACSLCCNF, IVYSIFLLFGLVVSCIVLAPG, VCFGLAAFFLLFCLLMYGVTS, GFWGIKILLFLGAIVAAFFIP, VWMYFGLIGSFLFILIQLVLL, VWAVLLLCATFLMYGFCVAGI, KFFISFNLILCIIASVLAIHP, LLQASVISLYTVYLTWSALSF, LAGMDSQAIIGVILMFVMVVY, VAYSYSFYHFMLMLASLYIMM, and IASSWLCQLIYIWTLLAPALF.

The protein belongs to the TDE1 family.

Its subcellular location is the endoplasmic reticulum membrane. In terms of biological role, enhances the incorporation of serine into phosphatidylserine and sphingolipids. This is Probable serine incorporator (serinc) from Nematostella vectensis (Starlet sea anemone).